Reading from the N-terminus, the 390-residue chain is Na(+)/H(+) antiporter NhaA 1 (390 aa).

A run of 11 helical transmembrane segments spans residues 14–34 (SGIL…NGVL), 59–79 (TILW…GLEL), 94–114 (VALP…IFYV), 125–145 (GWAI…FLLG), 154–174 (LFLL…IAIF), 179–199 (LSII…ILNY), 205–225 (IYIY…SGIH), 260–280 (PIVA…VVFS), 295–315 (IIFG…FLAI), 328–348 (WLHL…SLFI), and 362–382 (ANKI…YFVL).

Belongs to the NhaA Na(+)/H(+) (TC 2.A.33) antiporter family.

The protein resides in the cell inner membrane. It carries out the reaction Na(+)(in) + 2 H(+)(out) = Na(+)(out) + 2 H(+)(in). In terms of biological role, na(+)/H(+) antiporter that extrudes sodium in exchange for external protons. The chain is Na(+)/H(+) antiporter NhaA 1 from Campylobacter fetus subsp. fetus (strain 82-40).